A 363-amino-acid chain; its full sequence is Protein RecA (363 aa).

79–86 (GPESSGKT) is an ATP binding site.

It belongs to the RecA family.

The protein localises to the cytoplasm. Functionally, can catalyze the hydrolysis of ATP in the presence of single-stranded DNA, the ATP-dependent uptake of single-stranded DNA by duplex DNA, and the ATP-dependent hybridization of homologous single-stranded DNAs. It interacts with LexA causing its activation and leading to its autocatalytic cleavage. The chain is Protein RecA from Borrelia duttonii (strain Ly).